Consider the following 156-residue polypeptide: Enhancer of split M1 protein (156 aa).

A signal peptide spans 1-19 (MMSQTLTLCCLALVACVYG). Kazal-like domains lie at 23–81 (STND…AWCS) and 96–156 (KLEV…EEKC). 5 cysteine pairs are disulfide-bonded: cysteine 29–cysteine 62, cysteine 33–cysteine 55, cysteine 102–cysteine 135, cysteine 106–cysteine 128, and cysteine 114–cysteine 156.

The sequence is that of Enhancer of split M1 protein (Kaz-m1) from Drosophila melanogaster (Fruit fly).